Reading from the N-terminus, the 773-residue chain is Ergothioneine biosynthesis protein 1 (773 aa).

The tract at residues 16-322 (PESIEQSLKR…ESTIADYSTY (307 aa)) is L-histidine N(alpha)-methyltransferase. Position 51 (tyrosine 51) interacts with L-histidine. Residues glycine 85, lysine 91, aspartate 112, and 142–143 (CF) contribute to the S-adenosyl-L-methionine site. Residues asparagine 172, tyrosine 212, and 287–289 (EES) each bind L-histidine. The segment at 347-772 (ALRKVWLFIT…YAWIGARLVK (426 aa)) is hercynylcysteine S-oxide synthase. Fe cation-binding residues include histidine 382, histidine 476, and histidine 480.

This sequence in the N-terminal section; belongs to the methyltransferase superfamily. EgtD family. In the C-terminal section; belongs to the EgtB family. Requires Fe(2+) as cofactor.

It is found in the cytoplasm. Its subcellular location is the nucleus. The catalysed reaction is L-histidine + 3 S-adenosyl-L-methionine = hercynine + 3 S-adenosyl-L-homocysteine + 3 H(+). It carries out the reaction hercynine + L-cysteine + O2 = S-(hercyn-2-yl)-L-cysteine S-oxide + H2O. It functions in the pathway amino-acid biosynthesis; ergothioneine biosynthesis. Its function is as follows. Catalyzes the SAM-dependent triple methylation of the alpha-amino group of histidine to form hercynine and subsequent conjugation with cysteine and oxygen to form hercynylcysteine sulfoxide, the first two steps in the biosynthesis pathway of ergothioneine. May play a role in meiosis. This chain is Ergothioneine biosynthesis protein 1, found in Schizosaccharomyces pombe (strain 972 / ATCC 24843) (Fission yeast).